The following is a 372-amino-acid chain: Spermidine/putrescine import ATP-binding protein PotA (372 aa).

The region spanning isoleucine 11 to isoleucine 241 is the ABC transporter domain. Glycine 43–threonine 50 contacts ATP.

It belongs to the ABC transporter superfamily. Spermidine/putrescine importer (TC 3.A.1.11.1) family. In terms of assembly, the complex is composed of two ATP-binding proteins (PotA), two transmembrane proteins (PotB and PotC) and a solute-binding protein (PotD).

Its subcellular location is the cell inner membrane. The catalysed reaction is ATP + H2O + polyamine-[polyamine-binding protein]Side 1 = ADP + phosphate + polyamineSide 2 + [polyamine-binding protein]Side 1.. Functionally, part of the ABC transporter complex PotABCD involved in spermidine/putrescine import. Responsible for energy coupling to the transport system. The sequence is that of Spermidine/putrescine import ATP-binding protein PotA from Haemophilus influenzae (strain ATCC 51907 / DSM 11121 / KW20 / Rd).